The primary structure comprises 476 residues: Aspartyl/glutamyl-tRNA(Asn/Gln) amidotransferase subunit B (476 aa).

Belongs to the GatB/GatE family. GatB subfamily. In terms of assembly, heterotrimer of A, B and C subunits.

The catalysed reaction is L-glutamyl-tRNA(Gln) + L-glutamine + ATP + H2O = L-glutaminyl-tRNA(Gln) + L-glutamate + ADP + phosphate + H(+). It catalyses the reaction L-aspartyl-tRNA(Asn) + L-glutamine + ATP + H2O = L-asparaginyl-tRNA(Asn) + L-glutamate + ADP + phosphate + 2 H(+). Functionally, allows the formation of correctly charged Asn-tRNA(Asn) or Gln-tRNA(Gln) through the transamidation of misacylated Asp-tRNA(Asn) or Glu-tRNA(Gln) in organisms which lack either or both of asparaginyl-tRNA or glutaminyl-tRNA synthetases. The reaction takes place in the presence of glutamine and ATP through an activated phospho-Asp-tRNA(Asn) or phospho-Glu-tRNA(Gln). This Clostridium botulinum (strain Langeland / NCTC 10281 / Type F) protein is Aspartyl/glutamyl-tRNA(Asn/Gln) amidotransferase subunit B.